Reading from the N-terminus, the 280-residue chain is 4-diphosphocytidyl-2-C-methyl-D-erythritol kinase (280 aa).

K8 is an active-site residue. 91–101 contacts ATP; the sequence is PIEAGLAGGSS. D133 is an active-site residue.

It belongs to the GHMP kinase family. IspE subfamily.

The enzyme catalyses 4-CDP-2-C-methyl-D-erythritol + ATP = 4-CDP-2-C-methyl-D-erythritol 2-phosphate + ADP + H(+). It participates in isoprenoid biosynthesis; isopentenyl diphosphate biosynthesis via DXP pathway; isopentenyl diphosphate from 1-deoxy-D-xylulose 5-phosphate: step 3/6. Catalyzes the phosphorylation of the position 2 hydroxy group of 4-diphosphocytidyl-2C-methyl-D-erythritol. The protein is 4-diphosphocytidyl-2-C-methyl-D-erythritol kinase of Clostridium tetani (strain Massachusetts / E88).